The following is a 473-amino-acid chain: Bifunctional protein HldE (473 aa).

A ribokinase region spans residues 1–318 (MKLSMPRFDQ…RAIQREEGSE (318 aa)). 194–197 (NLSE) is a binding site for ATP. The active site involves aspartate 263. Residues 343 to 473 (FTNGCFDILH…TAIVEKIRKN (131 aa)) are cytidylyltransferase.

In the N-terminal section; belongs to the carbohydrate kinase PfkB family. It in the C-terminal section; belongs to the cytidylyltransferase family. As to quaternary structure, homodimer.

It catalyses the reaction D-glycero-beta-D-manno-heptose 7-phosphate + ATP = D-glycero-beta-D-manno-heptose 1,7-bisphosphate + ADP + H(+). It carries out the reaction D-glycero-beta-D-manno-heptose 1-phosphate + ATP + H(+) = ADP-D-glycero-beta-D-manno-heptose + diphosphate. It participates in nucleotide-sugar biosynthesis; ADP-L-glycero-beta-D-manno-heptose biosynthesis; ADP-L-glycero-beta-D-manno-heptose from D-glycero-beta-D-manno-heptose 7-phosphate: step 1/4. The protein operates within nucleotide-sugar biosynthesis; ADP-L-glycero-beta-D-manno-heptose biosynthesis; ADP-L-glycero-beta-D-manno-heptose from D-glycero-beta-D-manno-heptose 7-phosphate: step 3/4. Functionally, catalyzes the phosphorylation of D-glycero-D-manno-heptose 7-phosphate at the C-1 position to selectively form D-glycero-beta-D-manno-heptose-1,7-bisphosphate. In terms of biological role, catalyzes the ADP transfer from ATP to D-glycero-beta-D-manno-heptose 1-phosphate, yielding ADP-D-glycero-beta-D-manno-heptose. The protein is Bifunctional protein HldE of Pseudomonas putida (strain ATCC 47054 / DSM 6125 / CFBP 8728 / NCIMB 11950 / KT2440).